The following is a 238-amino-acid chain: ATP synthase subunit a (238 aa).

5 consecutive transmembrane segments (helical) span residues 18 to 38 (LTLLAVCIVTIAIVFAFVFWA), 76 to 96 (YSLLLFTIFLFVAVANNLGLF), 114 to 134 (NLAFDLALSLFITLMVHIEGV), 166 to 186 (SLAIRLFGNIFAGEVVTGLIV), and 193 to 213 (VYWWPIAFLVNMAWTAFSVFI).

It belongs to the ATPase A chain family. F-type ATPases have 2 components, CF(1) - the catalytic core - and CF(0) - the membrane proton channel. CF(1) has five subunits: alpha(3), beta(3), gamma(1), delta(1), epsilon(1). CF(0) has three main subunits: a(1), b(2) and c(9-12). The alpha and beta chains form an alternating ring which encloses part of the gamma chain. CF(1) is attached to CF(0) by a central stalk formed by the gamma and epsilon chains, while a peripheral stalk is formed by the delta and b chains.

The protein resides in the cell membrane. Its function is as follows. Key component of the proton channel; it plays a direct role in the translocation of protons across the membrane. In Streptococcus pyogenes serotype M1, this protein is ATP synthase subunit a.